A 229-amino-acid polypeptide reads, in one-letter code: Dephospho-CoA kinase domain-containing protein (229 aa).

Residues 3–207 enclose the DPCK domain; it reads LVGLTGGIAS…DCMQFLIIRA (205 aa). 8 to 15 provides a ligand contact to ATP; it reads GGIASGKS.

It belongs to the CoaE family.

This is Dephospho-CoA kinase domain-containing protein (dcakd) from Danio rerio (Zebrafish).